We begin with the raw amino-acid sequence, 718 residues long: Ribosomal RNA large subunit methyltransferase K/L (718 aa).

Residues 44 to 155 form the THUMP domain; that stretch reads DAYKVCIYSH…KQYVNVFLCL (112 aa).

Belongs to the methyltransferase superfamily. RlmKL family.

It localises to the cytoplasm. It carries out the reaction guanosine(2445) in 23S rRNA + S-adenosyl-L-methionine = N(2)-methylguanosine(2445) in 23S rRNA + S-adenosyl-L-homocysteine + H(+). It catalyses the reaction guanosine(2069) in 23S rRNA + S-adenosyl-L-methionine = N(2)-methylguanosine(2069) in 23S rRNA + S-adenosyl-L-homocysteine + H(+). Specifically methylates the guanine in position 2445 (m2G2445) and the guanine in position 2069 (m7G2069) of 23S rRNA. The sequence is that of Ribosomal RNA large subunit methyltransferase K/L from Francisella philomiragia subsp. philomiragia (strain ATCC 25017 / CCUG 19701 / FSC 153 / O#319-036).